A 246-amino-acid polypeptide reads, in one-letter code: Ribosomal RNA small subunit methyltransferase J (246 aa).

Residues 115–116 (ER) and aspartate 169 each bind S-adenosyl-L-methionine.

It belongs to the methyltransferase superfamily. RsmJ family.

It is found in the cytoplasm. The enzyme catalyses guanosine(1516) in 16S rRNA + S-adenosyl-L-methionine = N(2)-methylguanosine(1516) in 16S rRNA + S-adenosyl-L-homocysteine + H(+). In terms of biological role, specifically methylates the guanosine in position 1516 of 16S rRNA. This chain is Ribosomal RNA small subunit methyltransferase J, found in Buchnera aphidicola subsp. Acyrthosiphon pisum (strain Tuc7).